We begin with the raw amino-acid sequence, 347 residues long: Gamma-glutamyl hydrolase 2 (347 aa).

Positions 1 to 22 (MWSYVWLPLVALSLFKDSIIMA) are cleaved as a signal peptide. Residues 45–341 (APDPNLNYRP…IGYDEVYIFT (297 aa)) form the Gamma-glutamyl hydrolase domain. Cysteine 155 serves as the catalytic Nucleophile. Histidine 268 serves as the catalytic Proton donor.

The protein belongs to the peptidase C26 family. As to expression, expressed in roots, in leaves, stems and siliques.

It is found in the vacuole. Its subcellular location is the secreted. The protein localises to the extracellular space. It localises to the cell wall. The catalysed reaction is (6S)-5,6,7,8-tetrahydrofolyl-(gamma-L-Glu)(n) + (n-1) H2O = (6S)-5,6,7,8-tetrahydrofolate + (n-1) L-glutamate. Cleaves the polyglutamate sidechains of folate polyglutamates in the vacuole. Is important for polyglutamyl tail length determination before vacuolar exit. Plays a role on folate stability and intracellular folate content. Has endopeptidase activity against 4-amino-10-methylpteroyl penta-, tetra-, tri- and di-gamma-L-glutamate substrates and is responsible for the production of folic acid, also called pteroylglutamic acid (PteGlu) from teroylpolyglutamates. This chain is Gamma-glutamyl hydrolase 2 (GGH2), found in Arabidopsis thaliana (Mouse-ear cress).